Consider the following 198-residue polypeptide: Recombination protein RecR (198 aa).

A C4-type zinc finger spans residues 57–72 (CSVCGNLTDEDPCAIC). The 96-residue stretch at 80-175 (STILIVEDSR…KVTRLARGLA (96 aa)) folds into the Toprim domain.

It belongs to the RecR family.

Functionally, may play a role in DNA repair. It seems to be involved in an RecBC-independent recombinational process of DNA repair. It may act with RecF and RecO. The sequence is that of Recombination protein RecR from Streptococcus sanguinis (strain SK36).